The sequence spans 350 residues: Biotin synthase (350 aa).

The 219-residue stretch at 38–256 (NHVQVSTLLS…IAVARIMMPE (219 aa)) folds into the Radical SAM core domain. [4Fe-4S] cluster is bound by residues Cys-53, Cys-57, and Cys-60. [2Fe-2S] cluster-binding residues include Cys-97, Cys-128, Cys-188, and Arg-260.

Belongs to the radical SAM superfamily. Biotin synthase family. Homodimer. The cofactor is [4Fe-4S] cluster. [2Fe-2S] cluster serves as cofactor.

It catalyses the reaction (4R,5S)-dethiobiotin + (sulfur carrier)-SH + 2 reduced [2Fe-2S]-[ferredoxin] + 2 S-adenosyl-L-methionine = (sulfur carrier)-H + biotin + 2 5'-deoxyadenosine + 2 L-methionine + 2 oxidized [2Fe-2S]-[ferredoxin]. It participates in cofactor biosynthesis; biotin biosynthesis; biotin from 7,8-diaminononanoate: step 2/2. In terms of biological role, catalyzes the conversion of dethiobiotin (DTB) to biotin by the insertion of a sulfur atom into dethiobiotin via a radical-based mechanism. This is Biotin synthase from Aliivibrio fischeri (strain MJ11) (Vibrio fischeri).